The primary structure comprises 120 residues: uncharacterized protein (120 aa).

The chain crosses the membrane as a helical span at residues 8 to 28 (LIVKWFVGLMLIMMMVAVSLF).

The protein resides in the membrane. This is an uncharacterized protein from Bacillus anthracis.